A 66-amino-acid chain; its full sequence is Large ribosomal subunit protein uL29 (66 aa).

It belongs to the universal ribosomal protein uL29 family.

The protein is Large ribosomal subunit protein uL29 of Lysinibacillus sphaericus (strain C3-41).